The following is a 677-amino-acid chain: Probable potassium transport system protein Kup (677 aa).

12 helical membrane-spanning segments follow: residues 13–33 (GALI…LYTM), 54–74 (VSLV…IIAL), 98–118 (WLLL…TLTP), 137–157 (FIFP…LLIV), 171–191 (IFGP…LVNI), 217–237 (TGIF…ALYS), 249–269 (VSWI…GAWI), 296–316 (IFGV…LISG), 345–365 (MYIG…VWAF), 374–394 (AYGL…YQFI), 402–422 (ILAF…LIAS), and 429–449 (GGYA…IWFY).

Belongs to the HAK/KUP transporter (TC 2.A.72) family.

It localises to the cell membrane. The enzyme catalyses K(+)(in) + H(+)(in) = K(+)(out) + H(+)(out). In terms of biological role, transport of potassium into the cell. Likely operates as a K(+):H(+) symporter. This chain is Probable potassium transport system protein Kup, found in Leuconostoc mesenteroides subsp. mesenteroides (strain ATCC 8293 / DSM 20343 / BCRC 11652 / CCM 1803 / JCM 6124 / NCDO 523 / NBRC 100496 / NCIMB 8023 / NCTC 12954 / NRRL B-1118 / 37Y).